The following is a 685-amino-acid chain: Keratin, type II cytoskeletal 2 epidermal (685 aa).

Residues methionine 1–glycine 20 are disordered. The interval methionine 1–glutamine 196 is head. Arginine 22 bears the Asymmetric dimethylarginine mark. A phosphoserine mark is found at serine 25 and serine 28. Omega-N-methylarginine is present on arginine 52. Residue serine 64 is modified to Phosphoserine. The coil 1A stretch occupies residues glutamate 197–leucine 232. Residues glutamate 197–methionine 511 enclose the IF rod domain. The tract at residues glutamine 233–tyrosine 251 is linker 1. A coil 1B region spans residues isoleucine 252–leucine 343. The segment at glutamine 344–isoleucine 367 is linker 12. The interval isoleucine 368–glutamate 507 is coil 2. Residues glutamate 508–arginine 685 are tail. Residues valine 532–arginine 685 are disordered. Residues phenylalanine 538–serine 678 show a composition bias toward gly residues. Arginine 554, arginine 588, arginine 603, and arginine 653 each carry omega-N-methylarginine.

The protein belongs to the intermediate filament family. As to quaternary structure, heterotetramer of two type I and two type II keratins. Associates with KRT10.

The protein resides in the cytoplasm. In terms of biological role, probably contributes to terminal cornification. Associated with keratinocyte activation, proliferation and keratinization. Required for maintenance of corneocytes and keratin filaments in suprabasal keratinocytes in the epidermis of the ear, potentially via moderation of expression and localization of keratins and their partner proteins. Plays a role in the establishment of the epidermal barrier on plantar skin. The protein is Keratin, type II cytoskeletal 2 epidermal of Rattus norvegicus (Rat).